A 129-amino-acid chain; its full sequence is MAPKAEKKPASKAPAEKKPAAKKTASTDSKKRTKTRKETYSSYIYKVLKQTHPDTGISQKAMSIMNSFVNDIFERVASEASKLAAYNKKSTISAREIQTAVRLILPGELAKHAVSEATRTITKYSSAAN.

The segment covering 1 to 19 has biased composition (basic and acidic residues); the sequence is MAPKAEKKPASKAPAEKKP. The tract at residues 1–37 is disordered; it reads MAPKAEKKPASKAPAEKKPAAKKTASTDSKKRTKTRK. N6-acetyllysine; alternate is present on residues lysine 7 and lysine 8. Glycyl lysine isopeptide (Lys-Gly) (interchain with G-Cter in SUMO); alternate cross-links involve residues lysine 7 and lysine 8. Serine 11 carries the post-translational modification Phosphoserine. An N6-acetyllysine modification is found at lysine 12. Residue lysine 17 is modified to N6-acetyllysine; alternate. A Glycyl lysine isopeptide (Lys-Gly) (interchain with G-Cter in SUMO); alternate cross-link involves residue lysine 17. A Glycyl lysine isopeptide (Lys-Gly) (interchain with G-Cter in SUMO) cross-link involves residue lysine 18. A Glycyl lysine isopeptide (Lys-Gly) (interchain with G-Cter in ubiquitin) cross-link involves residue lysine 123.

Belongs to the histone H2B family. The nucleosome is a histone octamer containing two molecules each of H2A, H2B, H3 and H4 assembled in one H3-H4 heterotetramer and two H2A-H2B heterodimers. The octamer wraps approximately 147 bp of DNA. Monoubiquitinated by the UBC2-BRE1 complex to form H2BK123ub1. H2BK123ub1 gives a specific tag for epigenetic transcriptional activation and is also prerequisite for H3K4me and H3K79me formation. H2BK123ub1 also modulates the formation of double-strand breaks during meiosis and is a prerequisite for DNA-damage checkpoint activation. Post-translationally, phosphorylated by STE20 to form H2BS10ph during progression through meiotic prophase. May be correlated with chromosome condensation. In terms of processing, acetylated by GCN5 to form H2BK11ac and H2BK16ac. H2BK16ac can also be formed by ESA1. Acetylation of N-terminal lysines and particularly formation of H2BK11acK16ac has a positive effect on transcription. Sumoylation to form H2BK6su or H2BK7su, and probably also H2BK16su or H2BK17su, occurs preferentially near the telomeres and represses gene transcription.

Its subcellular location is the nucleus. It localises to the chromosome. In terms of biological role, core component of nucleosome. Nucleosomes wrap and compact DNA into chromatin, limiting DNA accessibility to the cellular machineries which require DNA as a template. Histones thereby play a central role in transcription regulation, DNA repair, DNA replication and chromosomal stability. DNA accessibility is regulated via a complex set of post-translational modifications of histones, also called histone code, and nucleosome remodeling. This Meyerozyma guilliermondii (strain ATCC 6260 / CBS 566 / DSM 6381 / JCM 1539 / NBRC 10279 / NRRL Y-324) (Yeast) protein is Histone H2B.1 (HTB1).